The primary structure comprises 235 residues: ATP synthase subunit a (235 aa).

A run of 5 helical transmembrane segments spans residues 17–37 (TTNIVSGLIIYAIVFFTLYGM), 76–96 (SFFAFVLFVFIFFANQFGLIF), 113–133 (PVVTLTLSLMVMVLAFAAGVA), 179–201 (LLMSLIANMAFSHGILTIIPGLF), and 211–230 (VFIGSIQAYVFVTLTTVYIS).

Belongs to the ATPase A chain family. F-type ATPases have 2 components, CF(1) - the catalytic core - and CF(0) - the membrane proton channel. CF(1) has five subunits: alpha(3), beta(3), gamma(1), delta(1), epsilon(1). CF(0) has three main subunits: a(1), b(2) and c(9-12). The alpha and beta chains form an alternating ring which encloses part of the gamma chain. CF(1) is attached to CF(0) by a central stalk formed by the gamma and epsilon chains, while a peripheral stalk is formed by the delta and b chains.

The protein resides in the cell membrane. In terms of biological role, key component of the proton channel; it plays a direct role in the translocation of protons across the membrane. The sequence is that of ATP synthase subunit a from Limosilactobacillus reuteri subsp. reuteri (strain JCM 1112) (Lactobacillus reuteri).